Consider the following 236-residue polypeptide: Small ribosomal subunit protein uS3 (236 aa).

Residues 39-112 (IREFITKHPK…RINLKVEEVG (74 aa)) form the KH type-2 domain. The segment at 212 to 236 (YGDDNDGADAQTGQASKKPKRSYKR) is disordered.

The protein belongs to the universal ribosomal protein uS3 family. In terms of assembly, part of the 30S ribosomal subunit. Forms a tight complex with proteins S10 and S14.

In terms of biological role, binds the lower part of the 30S subunit head. Binds mRNA in the 70S ribosome, positioning it for translation. In Rhodopirellula baltica (strain DSM 10527 / NCIMB 13988 / SH1), this protein is Small ribosomal subunit protein uS3.